Here is a 418-residue protein sequence, read N- to C-terminus: 3-phosphoshikimate 1-carboxyvinyltransferase (418 aa).

Residues K26, S27, and R31 each contribute to the 3-phosphoshikimate site. K26 serves as a coordination point for phosphoenolpyruvate. Phosphoenolpyruvate is bound by residues G97 and R125. 3-phosphoshikimate is bound by residues S170, S171, Q172, D297, N320, and K324. Q172 is a phosphoenolpyruvate binding site. Residue D297 is the Proton acceptor of the active site. Residues R328, R375, and K400 each coordinate phosphoenolpyruvate.

This sequence belongs to the EPSP synthase family. Monomer.

The protein localises to the cytoplasm. It catalyses the reaction 3-phosphoshikimate + phosphoenolpyruvate = 5-O-(1-carboxyvinyl)-3-phosphoshikimate + phosphate. The protein operates within metabolic intermediate biosynthesis; chorismate biosynthesis; chorismate from D-erythrose 4-phosphate and phosphoenolpyruvate: step 6/7. Its function is as follows. Catalyzes the transfer of the enolpyruvyl moiety of phosphoenolpyruvate (PEP) to the 5-hydroxyl of shikimate-3-phosphate (S3P) to produce enolpyruvyl shikimate-3-phosphate and inorganic phosphate. The polypeptide is 3-phosphoshikimate 1-carboxyvinyltransferase (Pseudomonas syringae pv. tomato (strain ATCC BAA-871 / DC3000)).